The primary structure comprises 156 residues: MARRRRAQTRKIDADPVYGSVVISKFINKLMYDGKKSKAENIFYKAMDLVKEKTGKDGLEAFNEAIENIKPRVEVKSRRVGGSTYQVPVDVRPDRQNSLAFTWLIDASRKRGGRSMIERLSNEIVDAIDGKGQAVAKRDTVHRMAEGNKAFAHFRW.

This sequence belongs to the universal ribosomal protein uS7 family. Part of the 30S ribosomal subunit. Contacts proteins S9 and S11.

Its function is as follows. One of the primary rRNA binding proteins, it binds directly to 16S rRNA where it nucleates assembly of the head domain of the 30S subunit. Is located at the subunit interface close to the decoding center, probably blocks exit of the E-site tRNA. This chain is Small ribosomal subunit protein uS7, found in Brachyspira hyodysenteriae (strain ATCC 49526 / WA1).